The sequence spans 61 residues: uncharacterized protein (61 aa).

This is an uncharacterized protein from Fowlpox virus (strain NVSL) (FPV).